The following is a 906-amino-acid chain: ATP-dependent DNA helicase DDX11 (906 aa).

One can recognise a Helicase ATP-binding domain in the interval 9-442 (GGIHFPFPFP…KNLMYIKQIL (434 aa)). ATP is bound at residue 44-51 (SPTGTGKS). The segment at 78–111 (APGSGPPSSEKNSLLTSSSCQEPTDTPRPAGEPD) is disordered. The span at 85–96 (SSEKNSLLTSSS) shows a compositional bias: low complexity. The residue at position 260 (Ser-260) is a Phosphoserine. Residues Cys-265 and Cys-283 each coordinate [4Fe-4S] cluster. The segment covering 284–301 (VDMQRSKREKNGTGEDKP) has biased composition (basic and acidic residues). Residues 284–310 (VDMQRSKREKNGTGEDKPKRKRQKIQT) form a disordered region. [4Fe-4S] cluster-binding residues include Cys-312 and Cys-347. The short motif at 390–393 (DEAH) is the DEAH box element.

It belongs to the DEAD box helicase family. DEAH subfamily. DDX11/CHL1 sub-subfamily. Associates with the CTF18-RFC complex. Associates with a cohesin complex composed of RAD21, SMC1 proteins and SMC3. Interacts with CHTF18. Interacts with DSCC1. Interacts with FEN1; this interaction is direct and increases flap endonuclease activity of FEN1. Interacts with PCNA. Interacts with POLR1A and UBTF. Interacts with RAD21, SMC1 proteins and SMC3. Interacts with RFC2. Interacts with TIMELESS; this interaction increases recruitment of both proteins onto chromatin in response to replication stress induction by hydroxyurea. The cofactor is [4Fe-4S] cluster.

The protein resides in the nucleus. The protein localises to the nucleolus. It localises to the cytoplasm. Its subcellular location is the cytoskeleton. It is found in the spindle pole. The protein resides in the midbody. The protein localises to the microtubule organizing center. It localises to the centrosome. The enzyme catalyses Couples ATP hydrolysis with the unwinding of duplex DNA at the replication fork by translocating in the 5'-3' direction. This creates two antiparallel DNA single strands (ssDNA). The leading ssDNA polymer is the template for DNA polymerase III holoenzyme which synthesizes a continuous strand.. It carries out the reaction ATP + H2O = ADP + phosphate + H(+). Functionally, DNA-dependent ATPase and ATP-dependent DNA helicase that participates in various functions in genomic stability, including DNA replication, DNA repair and heterochromatin organization as well as in ribosomal RNA synthesis. Its double-stranded DNA helicase activity requires either a minimal 5'-single-stranded tail length of approximately 15 nt (flap substrates) or 10 nt length single-stranded gapped DNA substrates of a partial duplex DNA structure for helicase loading and translocation along DNA in a 5' to 3' direction. The helicase activity is capable of displacing duplex regions up to 100 bp, which can be extended up to 500 bp by the replication protein A (RPA) or the cohesion CTF18-replication factor C (Ctf18-RFC) complex activities. Also shows ATPase- and helicase activities on substrates that mimic key DNA intermediates of replication, repair and homologous recombination reactions, including forked duplex, anti-parallel G-quadruplex and three-stranded D-loop DNA molecules. Plays a role in DNA double-strand break (DSB) repair at the DNA replication fork during DNA replication recovery from DNA damage. Recruited with TIMELESS factor upon DNA-replication stress response at DNA replication fork to preserve replication fork progression, and hence ensure DNA replication fidelity. Also cooperates with TIMELESS factor during DNA replication to regulate proper sister chromatid cohesion and mitotic chromosome segregation. Stimulates 5'-single-stranded DNA flap endonuclease activity of FEN1 in an ATP- and helicase-independent manner; and hence it may contribute in Okazaki fragment processing at DNA replication fork during lagging strand DNA synthesis. Its ability to function at DNA replication fork is modulated by its binding to long non-coding RNA (lncRNA) cohesion regulator non-coding RNA DDX11-AS1/CONCR, which is able to increase both DDX11 ATPase activity and binding to DNA replicating regions. Also plays a role in heterochromatin organization. Involved in rRNA transcription activation through binding to active hypomethylated rDNA gene loci by recruiting UBTF and the RNA polymerase Pol I transcriptional machinery. Plays a role in embryonic development and prevention of aneuploidy. Involved in melanoma cell proliferation and survival. Associates with chromatin at DNA replication fork regions. Binds to single- and double-stranded DNAs. The chain is ATP-dependent DNA helicase DDX11 from Mus musculus (Mouse).